The primary structure comprises 88 residues: Small ribosomal subunit protein uS17 (88 aa).

This sequence belongs to the universal ribosomal protein uS17 family. In terms of assembly, part of the 30S ribosomal subunit.

In terms of biological role, one of the primary rRNA binding proteins, it binds specifically to the 5'-end of 16S ribosomal RNA. The polypeptide is Small ribosomal subunit protein uS17 (Lawsonia intracellularis (strain PHE/MN1-00)).